We begin with the raw amino-acid sequence, 179 residues long: Large ribosomal subunit protein uL5 (179 aa).

It belongs to the universal ribosomal protein uL5 family. In terms of assembly, part of the 50S ribosomal subunit; part of the 5S rRNA/L5/L18/L25 subcomplex. Contacts the 5S rRNA and the P site tRNA. Forms a bridge to the 30S subunit in the 70S ribosome.

This is one of the proteins that bind and probably mediate the attachment of the 5S RNA into the large ribosomal subunit, where it forms part of the central protuberance. In the 70S ribosome it contacts protein S13 of the 30S subunit (bridge B1b), connecting the 2 subunits; this bridge is implicated in subunit movement. Contacts the P site tRNA; the 5S rRNA and some of its associated proteins might help stabilize positioning of ribosome-bound tRNAs. The sequence is that of Large ribosomal subunit protein uL5 from Synechococcus sp. (strain CC9311).